A 248-amino-acid chain; its full sequence is MRKKLIAGNWKSNGSLERNKALLEGIVNAKALGSVDVVVCPPFPYLQSVESAVSDSMIELGSQNCSATEDGAYTGEVSAKMCADMKCSWVILGHSERRALYAENDEVIACKVKRAVESGLAPILCVGETLADRESGRAEEVTLKQLDAVFMSVQPDDSWVVAYEPVWAIGTGKTASPEDAQSMHKALRNNIRKHFPQIADKIRILYGGSVKSSNAKELFSMPDVDGALVGGASLVSEEFVSIIEAAVE.

9 to 11 (NWK) contributes to the substrate binding site. His-94 acts as the Electrophile in catalysis. Glu-164 functions as the Proton acceptor in the catalytic mechanism. Substrate contacts are provided by residues Gly-170, Ser-209, and 230-231 (GG).

The protein belongs to the triosephosphate isomerase family. In terms of assembly, homodimer.

The protein resides in the cytoplasm. It carries out the reaction D-glyceraldehyde 3-phosphate = dihydroxyacetone phosphate. The protein operates within carbohydrate biosynthesis; gluconeogenesis. Its pathway is carbohydrate degradation; glycolysis; D-glyceraldehyde 3-phosphate from glycerone phosphate: step 1/1. Its function is as follows. Involved in the gluconeogenesis. Catalyzes stereospecifically the conversion of dihydroxyacetone phosphate (DHAP) to D-glyceraldehyde-3-phosphate (G3P). The chain is Triosephosphate isomerase from Hahella chejuensis (strain KCTC 2396).